Consider the following 224-residue polypeptide: ATP phosphoribosyltransferase (224 aa).

Belongs to the ATP phosphoribosyltransferase family. Short subfamily. In terms of assembly, heteromultimer composed of HisG and HisZ subunits.

It localises to the cytoplasm. It catalyses the reaction 1-(5-phospho-beta-D-ribosyl)-ATP + diphosphate = 5-phospho-alpha-D-ribose 1-diphosphate + ATP. It functions in the pathway amino-acid biosynthesis; L-histidine biosynthesis; L-histidine from 5-phospho-alpha-D-ribose 1-diphosphate: step 1/9. In terms of biological role, catalyzes the condensation of ATP and 5-phosphoribose 1-diphosphate to form N'-(5'-phosphoribosyl)-ATP (PR-ATP). Has a crucial role in the pathway because the rate of histidine biosynthesis seems to be controlled primarily by regulation of HisG enzymatic activity. The chain is ATP phosphoribosyltransferase from Cupriavidus taiwanensis (strain DSM 17343 / BCRC 17206 / CCUG 44338 / CIP 107171 / LMG 19424 / R1) (Ralstonia taiwanensis (strain LMG 19424)).